Here is a 566-residue protein sequence, read N- to C-terminus: Arginine--tRNA ligase (566 aa).

The short motif at 121–131 is the 'HIGH' region element; that stretch reads ANPNGPFHIGH.

It belongs to the class-I aminoacyl-tRNA synthetase family.

Its subcellular location is the cytoplasm. It catalyses the reaction tRNA(Arg) + L-arginine + ATP = L-arginyl-tRNA(Arg) + AMP + diphosphate. In Methanococcus maripaludis (strain C5 / ATCC BAA-1333), this protein is Arginine--tRNA ligase.